The primary structure comprises 740 residues: Autotransporter adhesin BtaE (740 aa).

A signal peptide spans 1–11 (MFGLSVNHAYA). The tract at residues 12-647 (GPGIFINDGT…LQTLDQANAY (636 aa)) is surface exposed passenger domain. An outer membrane translocation of the passenger domain region spans residues 648–686 (TDKKFGKLNEDIVATRIEARQAAAIGLAAASLRYDDRPG). 4 consecutive transmembrane segments (beta stranded) span residues 686 to 696 (GKISAAIGGGF), 700 to 710 (EGAVALGLGHT), 719 to 725 (NLSAATS), and 728 to 739 (NWGMGAGFSYTF). Residues 687–740 (KISAAIGGGFWRGEGAVALGLGHTSEDQRMRSNLSAATSGGNWGMGAGFSYTFN) are translocator domain.

It belongs to the autotransporter-2 (AT-2) (TC 1.B.40) family. As to quaternary structure, homotrimer.

The protein resides in the cell surface. It localises to the cell outer membrane. Binds to hyaluronic acid and epithelial cells, and is required for full virulence in the mouse model. The chain is Autotransporter adhesin BtaE from Brucella suis biovar 1 (strain 1330).